Here is a 537-residue protein sequence, read N- to C-terminus: Chaperonin GroEL (537 aa).

ATP contacts are provided by residues 29–32, 86–90, glycine 413, and aspartate 492; these read TLGP and DGTTT.

It belongs to the chaperonin (HSP60) family. Forms a cylinder of 14 subunits composed of two heptameric rings stacked back-to-back. Interacts with the co-chaperonin GroES.

It localises to the cytoplasm. It carries out the reaction ATP + H2O + a folded polypeptide = ADP + phosphate + an unfolded polypeptide.. Its function is as follows. Together with its co-chaperonin GroES, plays an essential role in assisting protein folding. The GroEL-GroES system forms a nano-cage that allows encapsulation of the non-native substrate proteins and provides a physical environment optimized to promote and accelerate protein folding. The sequence is that of Chaperonin GroEL from Dehalococcoides mccartyi (strain ATCC BAA-2100 / JCM 16839 / KCTC 5957 / BAV1).